Here is a 189-residue protein sequence, read N- to C-terminus: Putative biopolymer transport protein ExbB-like 1 (189 aa).

The next 3 membrane-spanning stretches (helical) occupy residues 14 to 34, 99 to 119, and 147 to 167; these read FVTT…LWVF, LVVL…GTVV, and LIAT…YLIL.

It belongs to the ExbB/TolQ family.

It is found in the cell inner membrane. In Helicobacter pylori (strain J99 / ATCC 700824) (Campylobacter pylori J99), this protein is Putative biopolymer transport protein ExbB-like 1.